The following is a 348-amino-acid chain: Dihydroorotase (348 aa).

Zn(2+) contacts are provided by His14 and His16. Substrate contacts are provided by residues 16–18 and Asn42; that span reads HLR. Positions 100, 137, and 175 each coordinate Zn(2+). The residue at position 100 (Lys100) is an N6-carboxylysine. His137 serves as a coordination point for substrate. Leu220 contributes to the substrate binding site. Asp248 contacts Zn(2+). Asp248 is an active-site residue. The substrate site is built by His252 and Ala264.

It belongs to the metallo-dependent hydrolases superfamily. DHOase family. Class II DHOase subfamily. Homodimer. Zn(2+) serves as cofactor.

It catalyses the reaction (S)-dihydroorotate + H2O = N-carbamoyl-L-aspartate + H(+). It functions in the pathway pyrimidine metabolism; UMP biosynthesis via de novo pathway; (S)-dihydroorotate from bicarbonate: step 3/3. Catalyzes the reversible cyclization of carbamoyl aspartate to dihydroorotate. The polypeptide is Dihydroorotase (Pseudomonas putida (strain W619)).